The chain runs to 81 residues: Large ribosomal subunit protein bL31B (81 aa).

The protein belongs to the bacterial ribosomal protein bL31 family. Type B subfamily. As to quaternary structure, part of the 50S ribosomal subunit.

The protein is Large ribosomal subunit protein bL31B of Cutibacterium acnes (strain DSM 16379 / KPA171202) (Propionibacterium acnes).